The chain runs to 206 residues: Ras-related protein Ral-B (206 aa).

Residue 21–29 (GSGGVGKSA) coordinates GTP. Residues 43–51 (YEPTKADSY) carry the Effector region motif. GTP-binding positions include 68-72 (DTAGQ), 128-131 (NKSD), and 158-160 (SAK). The interval 181–206 (MSENKDKNGRKSSKSKKSFKERCCLL) is disordered. A Cysteine methyl ester modification is found at Cys-203. Cys-203 carries the S-geranylgeranyl cysteine lipid modification. The propeptide at 204-206 (CLL) is removed in mature form.

This sequence belongs to the small GTPase superfamily. Ras family. Interacts with EXOC2/Sec5 and EXOC8/Exo84. Interacts (via effector domain) with RALBP1. Prenylation is essential for membrane localization. In terms of processing, the farnesylated form confers resistance to the proapoptotic and anti-anchorage-dependent growth effects of some geranylgeranyltransferase I inhibitors.

It localises to the cell membrane. The protein resides in the midbody. The catalysed reaction is GTP + H2O = GDP + phosphate + H(+). Alternates between an inactive form bound to GDP and an active form bound to GTP. Activated by a guanine nucleotide-exchange factor (GEF) and inactivated by a GTPase-activating protein (GAP). Its function is as follows. Multifunctional GTPase involved in a variety of cellular processes including gene expression, cell migration, cell proliferation, oncogenic transformation and membrane trafficking. Accomplishes its multiple functions by interacting with distinct downstream effectors. Acts as a GTP sensor for GTP-dependent exocytosis of dense core vesicles. Required both to stabilize the assembly of the exocyst complex and to localize functional exocyst complexes to the leading edge of migrating cells. Required for suppression of apoptosis. In late stages of cytokinesis, upon completion of the bridge formation between dividing cells, mediates exocyst recruitment to the midbody to drive abscission. Involved in ligand-dependent receptor mediated endocytosis of the EGF and insulin receptors. The protein is Ras-related protein Ral-B (Ralb) of Mus musculus (Mouse).